Reading from the N-terminus, the 274-residue chain is Triosephosphate isomerase (274 aa).

Substrate is bound at residue 31–33 (NWK). His-118 serves as the catalytic Electrophile. Catalysis depends on Glu-188, which acts as the Proton acceptor. Substrate is bound by residues Gly-194, Ser-234, and 255 to 256 (GG).

This sequence belongs to the triosephosphate isomerase family. As to quaternary structure, homodimer.

Its subcellular location is the cytoplasm. It carries out the reaction D-glyceraldehyde 3-phosphate = dihydroxyacetone phosphate. The protein operates within carbohydrate biosynthesis; gluconeogenesis. Its pathway is carbohydrate degradation; glycolysis; D-glyceraldehyde 3-phosphate from glycerone phosphate: step 1/1. In terms of biological role, involved in the gluconeogenesis. Catalyzes stereospecifically the conversion of dihydroxyacetone phosphate (DHAP) to D-glyceraldehyde-3-phosphate (G3P). The sequence is that of Triosephosphate isomerase from Chlamydia trachomatis serovar L2 (strain ATCC VR-902B / DSM 19102 / 434/Bu).